The primary structure comprises 1189 residues: Zinc finger CCCH domain-containing protein 6 (1189 aa).

Over residues 1 to 12 the composition is skewed to basic and acidic residues; the sequence is MTDSEHAGHDRE. A disordered region spans residues 1–105; that stretch reads MTDSEHAGHD…HKKRTGFYRD (105 aa). Residues 13-28 show a composition bias toward acidic residues; that stretch reads DGELEDGEIDDAGFEE. Residues 27–73 are a coiled coil; that stretch reads EEIQEKEAKENEKQKSEKAYRKSRKKHKKEREKKKSKRRKREKHKHN. A compositionally biased stretch (basic and acidic residues) spans 29-46; the sequence is IQEKEAKENEKQKSEKAY. Residues 47–73 are compositionally biased toward basic residues; that stretch reads RKSRKKHKKEREKKKSKRRKREKHKHN. C3H1-type zinc fingers lie at residues 273–299, 301–328, and 329–352; these read KGKQICKYFLEGRCIKGDQCKFDHDAE, EKRKEICKFYLQGYCTKGENCIYMHNEF, and PCKFYHSGAKCYQGDNCKFSHDDL. A coiled-coil region spans residues 353–385; that stretch reads TKETKKLLDKVLNTDEELINEDERELEELRKRG. Disordered regions lie at residues 451–530, 630–659, 676–755, 947–1026, and 1051–1189; these read FYTS…GPQN, PPVVQDSPNHGSGSDGSSTRTGHGPLPVPG, YQED…GNQV, LEQF…PYAP, and PRDH…SPFC. Over residues 461–478 the composition is skewed to low complexity; the sequence is QFQGSSPHPQHIYSSGSS. Residues 505–525 show a composition bias toward pro residues; that stretch reads AGPPGLPVPQSPPLPPGPPEI. A compositionally biased stretch (low complexity) spans 639–659; it reads HGSGSDGSSTRTGHGPLPVPG. Residues 718–741 show a composition bias toward polar residues; the sequence is KTLQKQTETLRNQQQPSTELSTPT. Residues 961 to 973 are compositionally biased toward basic and acidic residues; the sequence is GDPRLQKNFDPRL. Low complexity-rich tracts occupy residues 1009 to 1020 and 1056 to 1069; these read SGAGTSNSGSGA and SSSTSELATASSGE. A Phosphoserine modification is found at Ser-1158. A compositionally biased stretch (basic and acidic residues) spans 1164 to 1179; it reads DPGRETDDKSLKEVFK.

This Homo sapiens (Human) protein is Zinc finger CCCH domain-containing protein 6 (ZC3H6).